The primary structure comprises 483 residues: MGGQSSKIGTCCSHKTTALEAPDVENKENGEVNGVHSFREYSLEQLKIATSCFALENVVSEHGETAPNVVYQGKLENHMKIAIKRFSGTAWPDPRQFLEEARLVGQLRSKRMANLLGYCCEGGERLLVAEFMPNETLAKHLFHWDTEPMKWAMRLRVALYISEALEYCSNNGHTLYHDLNAYRVLFDEECNPRLSTFGLMKNSRDGKSYSTNLAFTPPEYLRTGRITAESVIYSFGTLLLDLLTGKHIPPSHALDLIRDRNLQTLTDSCLEGQFSDSDGTELVRLTSCCLQYEARERPNIKSLVTALISLQKDTEVLSHVLMGLPQSGTFASPPSPFAEACSGKDLTSMVEILEKIGYKDDEDLSFMWTEQMQEAINSKKKGDIAFRRKDFSEAIEFYTQFLDLGMISATVLVRRSQSYLMSNMAKEALDDAMKAQGISPVWYVALYLQSAALSVLGMEKESQIALTEGSILEARKISASTQN.

The N-myristoyl glycine moiety is linked to residue G2. The Protein kinase domain maps to 56-322; the sequence is ENVVSEHGET…DTEVLSHVLM (267 aa). Residues 62-70 and K84 each bind ATP; that span reads HGETAPNVV. D178 serves as the catalytic Proton acceptor.

This sequence belongs to the protein kinase superfamily. Ser/Thr protein kinase family.

The protein resides in the cell membrane. The catalysed reaction is L-seryl-[protein] + ATP = O-phospho-L-seryl-[protein] + ADP + H(+). It carries out the reaction L-threonyl-[protein] + ATP = O-phospho-L-threonyl-[protein] + ADP + H(+). Its function is as follows. Probable serine/threonine kinase that acts as a positive regulator of brassinosteroid (BR) signaling downstream of the receptor kinase BRI1. Functions redundantly with BSK3, BSK6, BSK7 and BSK8. In Arabidopsis thaliana (Mouse-ear cress), this protein is Serine/threonine-protein kinase BSK4.